The sequence spans 398 residues: Cyclic GMP-AMP synthase-like receptor (398 aa).

ATP-binding positions include S57 and 69–71 (EFD). Residues E69, D71, and D192 each contribute to the Mg(2+) site. GTP contacts are provided by residues D192 and 240-247 (SLSFQEQE). Residues 244–247 (QEQE), K265, and 277–281 (SYYIK) each bind ATP. Residues I288, E289, and D292 each contribute to the Mn(2+) site.

Belongs to the mab-21 family. Requires Mg(2+) as cofactor. Mn(2+) serves as cofactor.

It carries out the reaction GTP + ATP = 2',3'-cGAMP + 2 diphosphate. The catalysed reaction is GTP + ATP = pppGp(2'-5')A + diphosphate. It catalyses the reaction pppGp(2'-5')A = 2',3'-cGAMP + diphosphate. The enzyme activity is specifically activated by double-stranded RNA (dsRNA). In terms of biological role, nucleotidyltransferase that catalyzes the formation of cyclic GMP-AMP (2',3'-cGAMP) from ATP and GTP and plays a key role in innate immunity. Acts as a key sensor of double-stranded RNA (dsRNA), the presence of dsRNA in the cytoplasm being a danger signal that triggers the immune responses. Directly binds dsRNA, activating the nucleotidyltransferase activity, leading to synthesis of 2',3'-cGAMP, a second messenger that binds to and activates Sting, thereby triggering the antiviral immune response via activation of the NF-kappa-B transcription factor Rel (Relish). The protein is Cyclic GMP-AMP synthase-like receptor of Tribolium castaneum (Red flour beetle).